Here is a 757-residue protein sequence, read N- to C-terminus: 5-methyltetrahydropteroyltriglutamate--homocysteine methyltransferase (757 aa).

Residues 16-19 and K112 each bind 5-methyltetrahydropteroyltri-L-glutamate; that span reads RELK. Residues 433–435 and E486 each bind L-homocysteine; that span reads IGS. L-methionine contacts are provided by residues 433–435 and E486; that span reads IGS. Residues 517–518 and W563 contribute to the 5-methyltetrahydropteroyltri-L-glutamate site; that span reads RC. L-homocysteine is bound at residue D601. Residue D601 participates in L-methionine binding. 5-methyltetrahydropteroyltri-L-glutamate is bound at residue E607. Zn(2+) contacts are provided by H643, C645, and E667. H696 (proton donor) is an active-site residue. Residue C728 participates in Zn(2+) binding.

It belongs to the vitamin-B12 independent methionine synthase family. Requires Zn(2+) as cofactor.

It carries out the reaction 5-methyltetrahydropteroyltri-L-glutamate + L-homocysteine = tetrahydropteroyltri-L-glutamate + L-methionine. The protein operates within amino-acid biosynthesis; L-methionine biosynthesis via de novo pathway; L-methionine from L-homocysteine (MetE route): step 1/1. Functionally, catalyzes the transfer of a methyl group from 5-methyltetrahydrofolate to homocysteine resulting in methionine formation. This is 5-methyltetrahydropteroyltriglutamate--homocysteine methyltransferase from Histophilus somni (strain 2336) (Haemophilus somnus).